Here is a 121-residue protein sequence, read N- to C-terminus: Large ribosomal subunit protein bL20 (121 aa).

It belongs to the bacterial ribosomal protein bL20 family.

In terms of biological role, binds directly to 23S ribosomal RNA and is necessary for the in vitro assembly process of the 50S ribosomal subunit. It is not involved in the protein synthesizing functions of that subunit. The polypeptide is Large ribosomal subunit protein bL20 (Moorella thermoacetica (strain ATCC 39073 / JCM 9320)).